The sequence spans 311 residues: tRNA-cytidine(32) 2-sulfurtransferase (311 aa).

Residues 47–52 (SGGKDS) carry the PP-loop motif motif. Residues Cys122, Cys125, and Cys213 each coordinate [4Fe-4S] cluster.

The protein belongs to the TtcA family. Homodimer. Requires Mg(2+) as cofactor. [4Fe-4S] cluster is required as a cofactor.

It is found in the cytoplasm. It catalyses the reaction cytidine(32) in tRNA + S-sulfanyl-L-cysteinyl-[cysteine desulfurase] + AH2 + ATP = 2-thiocytidine(32) in tRNA + L-cysteinyl-[cysteine desulfurase] + A + AMP + diphosphate + H(+). It functions in the pathway tRNA modification. Catalyzes the ATP-dependent 2-thiolation of cytidine in position 32 of tRNA, to form 2-thiocytidine (s(2)C32). The sulfur atoms are provided by the cysteine/cysteine desulfurase (IscS) system. The protein is tRNA-cytidine(32) 2-sulfurtransferase of Salmonella arizonae (strain ATCC BAA-731 / CDC346-86 / RSK2980).